Here is a 238-residue protein sequence, read N- to C-terminus: MAKKPTGKNTSGRGQRDLTVKVKTARGRRLSSTRWLQRQLNDPYVKRAQAEGYRGRAAFKIMELDDKYRFLVPGARVVDLGCAPGGWAQVAVPRINALGEKSGKAIGRFIGIDLQEVEPLAGAEFHQLDFMDEGADDQVKEWLGGQADVVMSDMAASSSGHKQTDHLRIMSLCETAAYFAFDVLEEGGTFVAKVLAGGAEGELQKLLKQKFKSVANVKPPSSRADSSEKFVVATGFRG.

Residues glycine 85, tryptophan 87, aspartate 113, aspartate 129, and aspartate 153 each coordinate S-adenosyl-L-methionine. The Proton acceptor role is filled by lysine 193.

Belongs to the class I-like SAM-binding methyltransferase superfamily. RNA methyltransferase RlmE family.

The protein localises to the cytoplasm. It catalyses the reaction uridine(2552) in 23S rRNA + S-adenosyl-L-methionine = 2'-O-methyluridine(2552) in 23S rRNA + S-adenosyl-L-homocysteine + H(+). Its function is as follows. Specifically methylates the uridine in position 2552 of 23S rRNA at the 2'-O position of the ribose in the fully assembled 50S ribosomal subunit. The sequence is that of Ribosomal RNA large subunit methyltransferase E from Ruegeria sp. (strain TM1040) (Silicibacter sp.).